Reading from the N-terminus, the 2374-residue chain is Genome polyprotein (2374 aa).

Gly-115 is lipidated: N-myristoyl glycine; by host. Disordered stretches follow at residues 144-176 and 707-739; these read GDMP…GNVV and GADG…FDYP. Over residues 157–174 the composition is skewed to low complexity; sequence GSNKGGSSTSPKSTSNGN. A compositionally biased stretch (polar residues) spans 716–728; sequence APTSDLSDGNPTT. Residues 1361–1525 enclose the SF3 helicase domain; the sequence is YSTALSAISL…VAFSAAAALQ (165 aa). 1387–1394 lines the ATP pocket; that stretch reads GPPGTGKS. Gly-1600 carries N-myristoyl glycine; by host lipidation. The helical transmembrane segment at 1649–1669 threads the bilayer; sequence IFAASSFLSLIAATLTIVRCL. The segment at 1677–1699 is disordered; sequence GAYSGTPVPKPRKKDLPKQPVYS. Position 1679 is an O-(5'-phospho-RNA)-tyrosine (Tyr-1679). Positions 1700–1889 constitute a Peptidase C3 domain; sequence GPVRRQGFDP…FSARLTPERV (190 aa). Catalysis depends on for protease 3C activity residues His-1748, Glu-1779, and Cys-1852. In terms of domain architecture, RdRp catalytic spans 2126–2243; the sequence is SNVWSIDYSC…GSNQDFHPRE (118 aa). Residues Asp-2132 and Asp-2229 each act as for RdRp activity in the active site.

Interacts with capsid protein VP1. Interacts with capsid protein VP3. As to quaternary structure, interacts with capsid protein VP0. Interacts with capsid protein VP3. In terms of assembly, interacts with capsid protein VP0. Interacts with capsid protein VP1. Homodimer. Interacts with protein 2B. Interacts with protein 2C. As to quaternary structure, homodimer. Interacts with host ABCD3. Interacts with protein 2A. Interacts with host ACBD3. In terms of assembly, homodimer. Interacts with host ABCD3. Interacts with protein 2A. Interacts with protein 3A. Interacts with protein 3C. Interacts with host ACBD3. Homodimer. Interacts with host ABCD3 (via GOLD domain) and PI4KB; these interactions allow the formation of a viral protein/ACBD3/PI4KB complex in order to synthesize PI4P at the viral RNA replication sites. Interacts with protein 2C. Interacts with protein 3C. Protein 3C: Interacts with protein 2A. Protein 3C: Interacts with protein 2C. Specific enzymatic cleavages by the viral protease in vivo yield a variety of precursors and mature proteins. The leader protein-VP0 junction is cleaved by 3C proteinase. The VP1/2A junction is cleaved by the protein 3CD in association with protein 2A. In terms of processing, uridylylated by the polymerase and is covalently linked to the 5'-end of genomic RNA. This uridylylated form acts as a nucleotide-peptide primer for the polymerase.

It is found in the virion. The protein resides in the host cytoplasm. Its subcellular location is the host cytoplasmic vesicle membrane. It localises to the host Golgi apparatus membrane. The catalysed reaction is Selective cleavage of Gln-|-Gly bond in the poliovirus polyprotein. In other picornavirus reactions Glu may be substituted for Gln, and Ser or Thr for Gly.. It carries out the reaction RNA(n) + a ribonucleoside 5'-triphosphate = RNA(n+1) + diphosphate. The enzyme catalyses ATP + H2O = ADP + phosphate + H(+). Functionally, required for viral RNA replication and viral RNA encapsidation. Does not have any proteolytic activity. Forms an icosahedral capsid of pseudo T=3 symmetry with capsid proteins VP0 and VP3. Together they form an icosahedral capsid composed of 60 copies of each VP0, VP1, and VP3. All the three latter proteins contain a beta-sheet structure called beta-barrel jelly roll. In terms of biological role, forms an icosahedral capsid of pseudo T=3 symmetry with capsid proteins VP1 and VP3. Together they form an icosahedral capsid composed of 60 copies of each VP0, VP1, and VP3. All the three latter proteins contain a beta-sheet structure called beta-barrel jelly roll. Its function is as follows. Forms an icosahedral capsid of pseudo T=3 symmetry with capsid proteins VP0 and VP1. Together they form an icosahedral capsid composed of 60 copies of each VP0, VP1, and VP3. All the three latter proteins contain a beta-sheet structure called beta-barrel jelly roll. Functionally, required for viral RNA replication. Does not have any proteolytic activity. Affects membrane integrity and causes an increase in membrane permeability. In terms of biological role, induces and associates with structural rearrangements of intracellular membranes. Displays RNA-binding, nucleotide binding and NTPase activities. May play a role in virion morphogenesis and viral RNA encapsidation by interacting with the capsid protein VP3. Its function is as follows. Serves as membrane anchor via its hydrophobic domain. Plays an essential role in viral RNA replication by recruiting PI4KB at the viral replication sites, thereby allowing the formation of rearranged membranous structures where viral replication takes place. Functionally, forms a primer, VPg-pU, which is utilized by the polymerase for the initiation of RNA chains. Cysteine protease that generates mature viral proteins from the precursor polyprotein. In addition to its proteolytic activity, it binds to viral RNA, and thus influences viral genome replication. RNA and substrate cooperatively bind to the protease. In terms of biological role, replicates the genomic and antigenomic RNAs by recognizing replications specific signals. Performs VPg uridylylation. The chain is Genome polyprotein from Salivirus A (isolate Human/Nigeria/NG-J1/2007) (SV-A).